Here is a 488-residue protein sequence, read N- to C-terminus: 3-octaprenyl-4-hydroxybenzoate carboxy-lyase (488 aa).

Asparagine 172 provides a ligand contact to Mn(2+). Residues 175-177, 189-191, and 194-195 each bind prenylated FMN; these read IYR, RWL, and RG. Mn(2+) is bound at residue glutamate 238. The active-site Proton donor is aspartate 287.

It belongs to the UbiD family. In terms of assembly, homohexamer. Prenylated FMN serves as cofactor. It depends on Mn(2+) as a cofactor.

The protein localises to the cell membrane. The catalysed reaction is a 4-hydroxy-3-(all-trans-polyprenyl)benzoate + H(+) = a 2-(all-trans-polyprenyl)phenol + CO2. It functions in the pathway cofactor biosynthesis; ubiquinone biosynthesis. Its function is as follows. Catalyzes the decarboxylation of 3-octaprenyl-4-hydroxy benzoate to 2-octaprenylphenol, an intermediate step in ubiquinone biosynthesis. This Stutzerimonas stutzeri (strain A1501) (Pseudomonas stutzeri) protein is 3-octaprenyl-4-hydroxybenzoate carboxy-lyase.